The primary structure comprises 199 residues: V-set and transmembrane domain-containing protein 5 (199 aa).

The signal sequence occupies residues 1 to 27 (MRPLRCGERTQGIPLGLLAFWVTAARC). The Extracellular segment spans residues 28–146 (LQSQGVSLYI…VSEIRYEDLH (119 aa)). The Ig-like C2-type domain occupies 35–138 (LYIPQSAINA…QSGTILLRVS (104 aa)). N43, N87, and N101 each carry an N-linked (GlcNAc...) asparagine glycan. The helical transmembrane segment at 147–167 (FVAVFFALLAAVAVVLISLMW) threads the bilayer. The Cytoplasmic segment spans residues 168–199 (VCNQCAYKFQRKRRYKLKESTTEEIEMKEVEC). The important for CDC42-dependent filopodia induction stretch occupies residues 169–185 (CNQCAYKFQRKRRYKLK).

Can homooligomerize through cis interactions within the same cell membrane. Post-translationally, N-glycosylated. In terms of tissue distribution, highly expressed in the central nervous system (CNS), with the highest expression in thalamus, hippocampus, cerebrum, midbrain and spinal cord. Also highly expressed in stomach, kidney and small intestine.

Its subcellular location is the cell membrane. The protein resides in the cell projection. It is found in the dendrite. It localises to the axon. Cell adhesion-like membrane protein of the central nervous system (CNS) which modulates both the position and complexity of central neurons by altering their membrane morphology and dynamics. Involved in the formation of neuronal dendrites and protrusions including dendritic filopodia. In synaptogenesis, regulates synapse formation by altering dendritic spine morphology and actin distribution. Promotes formation of unstable neuronal spines such as thin and branched types. Regulates neuronal morphogenesis and migration during cortical development in the brain. This is V-set and transmembrane domain-containing protein 5 from Mus musculus (Mouse).